We begin with the raw amino-acid sequence, 792 residues long: MYRVLRLLPLPLSVAISLSALADEKPPNWGLCPATLPLQGFEQAPGMDKHVVQSRPQLPTNIEGDTLTGTARTPLYQGNVLMARGDQFLGADSVRMDTETDSYVAEGHVRYQDSSILVVADRAEGNQDTDVHKISNIQYQLIGRRGNGVAKSVDIHGQVGQTHEATYTTCDPSQAIWRLRAPEIDVDNVEGFGVARHAVFEVGQWPVLYLPWFKFPIDSRRQTGLLYPQLGYSGRNGFDYAQPIYLNLAPNYDATLYPRYMQKRGFMIDTEFRYLYDDGKWQTRAAFIPNDQLRDKDRGRFSFNGYHNIDNHWQARASLAWVSDTRYMEDFSSRLVGMSSLSSLQSTVGVYGTGETWTAGLMADRWQLTDYSLDESALAYNRQPRLFFNWDKPVFDFLEFGLYSEVVRFKHDDAYLVALQNDGNYLRTGEVIRYYGGTRLDVKPYLLLPFTGASWYVTPTFGWRYSSYYLDSGIAEQLNGNRTPVRSLPIISLDSGVYLDRDTSVFGRNYLNTLEPRFYYLYVPYRNQSDLPLFDTRAFTFSWGQLFRDSRYTGPDRQNDANQLTLAVTSRWLDQNTGKEDLALSVGQILYFKDSLVTLNDSEERIQQGKSVWVSDVAYNVNDRWTLNATYQWNPNFRRDDLASIRARYLIGSDGIINLAYRYRRNTLDGTTQLKQTDFSFLYPINPRWSAIGRYYYSLLDKKPLEIISGLQWDSCCLAVRTVLRRYMRDRTGNMDNSIQLEFVFKGLSSVGQDTDRVLRRAILGYYRDDLYLVPPSNTTTDPDAYDPNKIP.

The signal sequence occupies residues 1 to 22; that stretch reads MYRVLRLLPLPLSVAISLSALA.

Belongs to the LptD family. Component of the lipopolysaccharide transport and assembly complex. Interacts with LptE and LptA.

The protein localises to the cell outer membrane. Together with LptE, is involved in the assembly of lipopolysaccharide (LPS) at the surface of the outer membrane. The sequence is that of LPS-assembly protein LptD from Xylella fastidiosa (strain 9a5c).